A 542-amino-acid chain; its full sequence is uncharacterized protein (542 aa).

The next 5 helical transmembrane spans lie at 4–23 (FVEN…LLLG), 28–47 (FGFR…FSTI), 51–70 (ITVP…YTIG), 91–113 (LALG…LGLA), and 160–182 (YSLT…GGLF). 2 RCK C-terminal domains span residues 190-272 (AKNA…LLGE) and 274-355 (VDGH…IFGD). 5 helical membrane-spanning segments follow: residues 363 to 385 (FNLV…EFPL), 390 to 412 (ALSL…MGRT), 425 to 447 (LALR…GAGF), 457 to 479 (LLII…VIGH), and 519 to 541 (YTSV…LFLL).

The protein belongs to the AAE transporter (TC 2.A.81) family.

The protein localises to the cell membrane. This is an uncharacterized protein from Corynebacterium efficiens (strain DSM 44549 / YS-314 / AJ 12310 / JCM 11189 / NBRC 100395).